The chain runs to 739 residues: Photosystem I P700 chlorophyll a apoprotein A1 (739 aa).

The next 8 helical transmembrane spans lie at 61–84, 147–170, 186–210, 281–299, 336–359, 375–401, 423–445, and 520–538; these read IFSAHFGHLAVVFVWLSGMYFHGA, LYVTAIGGLVMAALMVFAGWFHYH, MNHHLSVLLGCGSLGWTGHLIHVSL, VAHHHLAIAVLFIIAGHMY, WHAQLAVNLALLGSLTIVIAHHMY, LSLFTHHTWIGGFLIVGAGAHGAIFMV, AIISHLNWVCIFLGFHSFGLYIH, and FMVHHIHAFTIHVTVLILL. Positions 562 and 571 each coordinate [4Fe-4S] cluster. Transmembrane regions (helical) follow at residues 578–599 and 653–675; these read HVFLGLFWMYNSLSIVIFHFSW and LSAYGIMFLAGHFVFAFSLMFLF. His-664 contributes to the chlorophyll a' binding site. Residues Met-672 and Tyr-680 each coordinate chlorophyll a. Trp-681 provides a ligand contact to phylloquinone. The chain crosses the membrane as a helical span at residues 713–733; sequence AVGVAHYLLGGIVTTWAFFLA.

It belongs to the PsaA/PsaB family. The PsaA/B heterodimer binds the P700 chlorophyll special pair and subsequent electron acceptors. PSI consists of a core antenna complex that captures photons, and an electron transfer chain that converts photonic excitation into a charge separation. The cyanobacterial PSI reaction center is composed of one copy each of PsaA,B,C,D,E,F,I,J,K,L,M and X, and forms trimeric complexes. PSI electron transfer chain: 5 chlorophyll a, 1 chlorophyll a', 2 phylloquinones and 3 4Fe-4S clusters. PSI core antenna: 90 chlorophyll a, 22 carotenoids, 3 phospholipids and 1 galactolipid. P700 is a chlorophyll a/chlorophyll a' dimer, A0 is one or more chlorophyll a, A1 is one or both phylloquinones and FX is a shared 4Fe-4S iron-sulfur center. serves as cofactor.

Its subcellular location is the cellular thylakoid membrane. The enzyme catalyses reduced [plastocyanin] + hnu + oxidized [2Fe-2S]-[ferredoxin] = oxidized [plastocyanin] + reduced [2Fe-2S]-[ferredoxin]. PsaA and PsaB bind P700, the primary electron donor of photosystem I (PSI), as well as the electron acceptors A0, A1 and FX. PSI is a plastocyanin/cytochrome c6-ferredoxin oxidoreductase, converting photonic excitation into a charge separation, which transfers an electron from the donor P700 chlorophyll pair to the spectroscopically characterized acceptors A0, A1, FX, FA and FB in turn. Oxidized P700 is reduced on the lumenal side of the thylakoid membrane by plastocyanin or cytochrome c6. The chain is Photosystem I P700 chlorophyll a apoprotein A1 from Picosynechococcus sp. (strain ATCC 27264 / PCC 7002 / PR-6) (Agmenellum quadruplicatum).